The following is a 194-amino-acid chain: Ancillary SecYEG translocon subunit (194 aa).

Residues 1-10 (MHLNKMKKVS) are Cytoplasmic-facing. The helical transmembrane segment at 11–31 (LKTYLVLFFLIFFIFCSFWFI) threads the bilayer. The Periplasmic portion of the chain corresponds to 32-194 (KPKEKKLKLE…INMKINEIKR (163 aa)).

The protein belongs to the YfgM family. As to quaternary structure, interacts with the SecYEG translocon. Forms a complex with PpiD.

Its subcellular location is the cell inner membrane. Its function is as follows. May mediate protein transfer from the SecYEG translocon to the periplasmic chaperone network via its periplasmic C-terminal region. This is Ancillary SecYEG translocon subunit from Buchnera aphidicola subsp. Schizaphis graminum (strain Sg).